Here is a 1086-residue protein sequence, read N- to C-terminus: Lysine-specific demethylase 4B (1086 aa).

Residues Ile-15–Arg-57 form the JmjN domain. 2-oxoglutarate is bound at residue Tyr-133. The JmjC domain occupies Val-146–Cys-309. Fe cation is bound by residues His-189 and Glu-191. 2 residues coordinate 2-oxoglutarate: Asn-199 and Lys-207. 2 residues coordinate Zn(2+): Cys-235 and His-241. Lys-242 is a 2-oxoglutarate binding site. Residue His-277 coordinates Fe cation. Residues Cys-307 and Cys-309 each contribute to the Zn(2+) site. A compositionally biased stretch (basic and acidic residues) spans Ser-379–Arg-395. 2 disordered regions span residues Ser-379–Ala-536 and Pro-575–Val-624. Basic residues predominate over residues Ser-401–Lys-410. Positions Met-441–Leu-450 are enriched in acidic residues. A compositionally biased stretch (basic and acidic residues) spans His-456 to Gly-467. A compositionally biased stretch (basic residues) spans Lys-468–Thr-480. The span at Gly-512–Gly-522 shows a compositional bias: low complexity. Residues Gln-585–Phe-597 show a composition bias toward polar residues. Lys-599 carries the post-translational modification N6-acetyllysine. The PHD-type 1 zinc-finger motif lies at Met-719 to Ala-777. The segment at Thr-782–Val-815 adopts a C2HC pre-PHD-type zinc-finger fold. Residues Leu-838–Arg-895 form a PHD-type 2 zinc finger. 2 Tudor domains span residues Arg-905–Leu-962 and Gly-963–Pro-1019. Positions Ser-1024–Val-1043 are disordered. Residues Leu-1026–Ser-1037 are compositionally biased toward polar residues.

It belongs to the JHDM3 histone demethylase family. The cofactor is Fe(2+).

Its subcellular location is the nucleus. It catalyses the reaction N(6),N(6),N(6)-trimethyl-L-lysyl(9)-[histone H3] + 2 2-oxoglutarate + 2 O2 = N(6)-methyl-L-lysyl(9)-[histone H3] + 2 formaldehyde + 2 succinate + 2 CO2. Functionally, histone demethylase that specifically demethylates 'Lys-9' of histone H3, thereby playing a role in histone code. Does not demethylate histone H3 'Lys-4', H3 'Lys-27', H3 'Lys-36' nor H4 'Lys-20'. Only able to demethylate trimethylated H3 'Lys-9', with a weaker activity than KDM4A, KDM4C and KDM4D. Demethylation of Lys residue generates formaldehyde and succinate. Plays a critical role in the development of the central nervous system (CNS). The sequence is that of Lysine-specific demethylase 4B (Kdm4b) from Mus musculus (Mouse).